The sequence spans 643 residues: 1-deoxy-D-xylulose-5-phosphate synthase (643 aa).

Residues His-89 and 130 to 132 each bind thiamine diphosphate; that span reads GHS. Position 161 (Asp-161) interacts with Mg(2+). Residues 162 to 163, Asn-190, Phe-297, and Glu-380 each bind thiamine diphosphate; that span reads GA. Residue Asn-190 coordinates Mg(2+).

It belongs to the transketolase family. DXPS subfamily. Homodimer. It depends on Mg(2+) as a cofactor. Thiamine diphosphate is required as a cofactor.

The enzyme catalyses D-glyceraldehyde 3-phosphate + pyruvate + H(+) = 1-deoxy-D-xylulose 5-phosphate + CO2. It functions in the pathway metabolic intermediate biosynthesis; 1-deoxy-D-xylulose 5-phosphate biosynthesis; 1-deoxy-D-xylulose 5-phosphate from D-glyceraldehyde 3-phosphate and pyruvate: step 1/1. Functionally, catalyzes the acyloin condensation reaction between C atoms 2 and 3 of pyruvate and glyceraldehyde 3-phosphate to yield 1-deoxy-D-xylulose-5-phosphate (DXP). This chain is 1-deoxy-D-xylulose-5-phosphate synthase, found in Hahella chejuensis (strain KCTC 2396).